The primary structure comprises 329 residues: Transmembrane protein I329L (329 aa).

An N-terminal signal peptide occupies residues 1–31 (MLRVFIFFVFLGSGLAGKVKSPITCKYFISK). Residues Asn-32, Asn-39, Asn-44, Asn-58, Asn-76, Asn-82, Asn-101, Asn-185, and Asn-219 are each glycosylated (N-linked (GlcNAc...) asparagine; by host). At 32–239 (NNTWYKYNVT…NTERYKNCYP (208 aa)) the chain is on the extracellular side. Residues 240–260 (FVLVSIICSCISSLFLLICLL) form a helical membrane-spanning segment. At 261-329 (RTICKKYSCT…EKKVSCSRRK (69 aa)) the chain is on the cytoplasmic side.

It belongs to the asfivirus I329L family. Highly glycosylated.

It localises to the host endoplasmic reticulum membrane. Its subcellular location is the host Golgi apparatus membrane. In terms of biological role, viral TLR3 homolog that probably prevents TLR3 dimerization and subsequent induction of IFN. Inhibits dsRNA-stimulated activation of NF-kB and IRF3. The protein is Transmembrane protein I329L of Ornithodoros (relapsing fever ticks).